Reading from the N-terminus, the 221-residue chain is Very-long-chain (3R)-3-hydroxyacyl-CoA dehydratase PASTICCINO 2 (221 aa).

The Cytoplasmic portion of the chain corresponds to 1–11; sequence MAGFLSVVRRV. Residues 12–32 form a helical membrane-spanning segment; the sequence is YLTLYNWIVFAGWAQVLYLAI. Residues 33-51 are Lumenal-facing; it reads TTLKETGYENVYDAIEKPL. A helical transmembrane segment spans residues 52 to 70; it reads QLAQTAAVLEILHGLVGLV. The Cytoplasmic portion of the chain corresponds to 71–76; sequence RSPVSA. Residues 77–95 form a helical membrane-spanning segment; it reads TLPQIGSRLFLTWGILYSF. The Lumenal portion of the chain corresponds to 96-100; the sequence is PEVRS. The helical transmembrane segment at 101–122 threads the bilayer; the sequence is HFLVTSLVISWSITEIIRYSFF. The Cytoplasmic segment spans residues 123 to 142; it reads GFKEALGFAPSWHLWLRYSS. A helical membrane pass occupies residues 143-165; that stretch reads FLLLYPTGITSEVGLIYLALPHI. Active-site residues include Tyr147 and Glu154. Residues 166–184 are Lumenal-facing; sequence KTSEMYSVRMPNILNFSFD. A helical membrane pass occupies residues 185–204; that stretch reads FFYATILVLAIYVPGSPHMY. Residues 205–221 lie on the Cytoplasmic side of the membrane; sequence RYMLGQRKRALSKSKRE.

Belongs to the very long-chain fatty acids dehydratase HACD family. As to quaternary structure, interacts with CDKA-1; but only with the 'Tyr-15' phosphorylated protein. Interacts with PAS1. Part of the fatty acid elongase complex which contains a beta-ketoacyl-CoA synthase (KCS), a beta-ketoacyl-CoA reductase (KCR), a beta-hydroxyacyl-CoA dehydratase (HCD) and an enoyl-CoA reductase (ECR). High expression in young seedlings, roots, root tips, flowers and young siliques. Lower levels in leaves and stems.

The protein localises to the endoplasmic reticulum membrane. Its subcellular location is the cytoplasm. It is found in the nucleus. The catalysed reaction is a very-long-chain (3R)-3-hydroxyacyl-CoA = a very-long-chain (2E)-enoyl-CoA + H2O. It participates in lipid metabolism; fatty acid biosynthesis. Functionally, catalyzes the third of the four reactions of the long-chain fatty acids elongation cycle. This endoplasmic reticulum-bound enzymatic process, allows the addition of two carbons to the chain of long- and very long-chain fatty acids/VLCFAs per cycle. This enzyme catalyzes the dehydration of the 3-hydroxyacyl-CoA intermediate into trans-2,3-enoyl-CoA, within each cycle of fatty acid elongation. Thereby, it participates in the production of VLCFAs of different chain lengths that are involved in multiple biological processes as precursors of membrane lipids and lipid mediators. May be an anti-phosphatase that prevents CDKA-1 dephosphorylation and activation. Involved in the hormonal control of cell division and differentiation. Required for proliferation control of meristematic and non-meristematic cells. Negative regulator of the cell cycle. The sequence is that of Very-long-chain (3R)-3-hydroxyacyl-CoA dehydratase PASTICCINO 2 (PAS2) from Arabidopsis thaliana (Mouse-ear cress).